A 238-amino-acid chain; its full sequence is Proteasome subunit beta type-6 (238 aa).

Ala2 carries the post-translational modification N-acetylalanine. The propeptide at 2–33 (AAALAVRRAGSAPAFGPEALTPDWENREVSTG) is removed in mature form. Residue Thr34 is the Nucleophile of the active site. Position 68 is a phosphothreonine (Thr68).

Belongs to the peptidase T1B family. The 26S proteasome consists of a 20S proteasome core and two 19S regulatory subunits. The 20S proteasome core is a barrel-shaped complex made of 28 subunits that are arranged in four stacked rings. The two outer rings are each formed by seven alpha subunits, and the two inner rings are formed by seven beta subunits. The proteolytic activity is exerted by three beta-subunits PSMB5, PSMB6 and PSMB7.

It is found in the cytoplasm. Its subcellular location is the nucleus. The catalysed reaction is Cleavage of peptide bonds with very broad specificity.. Component of the 20S core proteasome complex involved in the proteolytic degradation of most intracellular proteins. This complex plays numerous essential roles within the cell by associating with different regulatory particles. Associated with two 19S regulatory particles, forms the 26S proteasome and thus participates in the ATP-dependent degradation of ubiquitinated proteins. The 26S proteasome plays a key role in the maintenance of protein homeostasis by removing misfolded or damaged proteins that could impair cellular functions, and by removing proteins whose functions are no longer required. Associated with the PA200 or PA28, the 20S proteasome mediates ubiquitin-independent protein degradation. This type of proteolysis is required in several pathways including spermatogenesis (20S-PA200 complex) or generation of a subset of MHC class I-presented antigenic peptides (20S-PA28 complex). Within the 20S core complex, PSMB6 displays a peptidylglutamyl-hydrolyzing activity also termed postacidic or caspase-like activity, meaning that the peptides bond hydrolysis occurs directly after acidic residues. This Mus musculus (Mouse) protein is Proteasome subunit beta type-6 (Psmb6).